Here is a 60-residue protein sequence, read N- to C-terminus: MDSTLLEIVACPICHGRLALDQTSQKLVCHFDKVAYDINQGIPVLLAEQAMPLSARQEEP.

This sequence belongs to the UPF0434 family.

This Pasteurella multocida (strain Pm70) protein is UPF0434 protein PM0859.